Consider the following 346-residue polypeptide: Probable electron transfer flavoprotein subunit alpha, mitochondrial (346 aa).

285–313 lines the FAD pocket; that stretch reads LYVAIGISGAIQHLAGMKESKMIIAINKD.

Belongs to the ETF alpha-subunit/FixB family. In terms of assembly, heterodimer of an alpha and a beta subunit. Requires FAD as cofactor.

It is found in the mitochondrion matrix. Its function is as follows. The electron transfer flavoprotein serves as a specific electron acceptor for several dehydrogenases, including five acyl-CoA dehydrogenases, glutaryl-CoA and sarcosine dehydrogenase. It transfers the electrons to the main mitochondrial respiratory chain via ETF-ubiquinone oxidoreductase (ETF dehydrogenase). In Cryptococcus gattii serotype B (strain WM276 / ATCC MYA-4071) (Filobasidiella gattii), this protein is Probable electron transfer flavoprotein subunit alpha, mitochondrial (ETF1).